Consider the following 407-residue polypeptide: Arginine biosynthesis bifunctional protein ArgJ (407 aa).

The substrate site is built by Thr157, Lys183, Thr194, Glu280, Asn402, and Thr407. Thr194 functions as the Nucleophile in the catalytic mechanism.

The protein belongs to the ArgJ family. In terms of assembly, heterotetramer of two alpha and two beta chains.

It is found in the cytoplasm. It carries out the reaction N(2)-acetyl-L-ornithine + L-glutamate = N-acetyl-L-glutamate + L-ornithine. It catalyses the reaction L-glutamate + acetyl-CoA = N-acetyl-L-glutamate + CoA + H(+). It functions in the pathway amino-acid biosynthesis; L-arginine biosynthesis; L-ornithine and N-acetyl-L-glutamate from L-glutamate and N(2)-acetyl-L-ornithine (cyclic): step 1/1. It participates in amino-acid biosynthesis; L-arginine biosynthesis; N(2)-acetyl-L-ornithine from L-glutamate: step 1/4. Its function is as follows. Catalyzes two activities which are involved in the cyclic version of arginine biosynthesis: the synthesis of N-acetylglutamate from glutamate and acetyl-CoA as the acetyl donor, and of ornithine by transacetylation between N(2)-acetylornithine and glutamate. In Bacillus cereus (strain ATCC 10987 / NRS 248), this protein is Arginine biosynthesis bifunctional protein ArgJ.